The primary structure comprises 187 residues: Large ribosomal subunit protein eL18B (187 aa).

Threonine 134 carries the post-translational modification Phosphothreonine. Position 136 is a phosphoserine (serine 136).

This sequence belongs to the eukaryotic ribosomal protein eL18 family. In terms of assembly, component of the large ribosomal subunit (LSU). Mature yeast ribosomes consist of a small (40S) and a large (60S) subunit. The 40S small subunit contains 1 molecule of ribosomal RNA (18S rRNA) and at least 33 different proteins. The large 60S subunit contains 3 rRNA molecules (25S, 5.8S and 5S rRNA) and at least 46 different proteins. eL18 interacts with NAP1.

It is found in the cytoplasm. In terms of biological role, component of the ribosome, a large ribonucleoprotein complex responsible for the synthesis of proteins in the cell. The small ribosomal subunit (SSU) binds messenger RNAs (mRNAs) and translates the encoded message by selecting cognate aminoacyl-transfer RNA (tRNA) molecules. The large subunit (LSU) contains the ribosomal catalytic site termed the peptidyl transferase center (PTC), which catalyzes the formation of peptide bonds, thereby polymerizing the amino acids delivered by tRNAs into a polypeptide chain. The nascent polypeptides leave the ribosome through a tunnel in the LSU and interact with protein factors that function in enzymatic processing, targeting, and the membrane insertion of nascent chains at the exit of the ribosomal tunnel. This Schizosaccharomyces pombe (strain 972 / ATCC 24843) (Fission yeast) protein is Large ribosomal subunit protein eL18B (rpl1802).